A 310-amino-acid polypeptide reads, in one-letter code: Ribosomal RNA small subunit methyltransferase H (310 aa).

S-adenosyl-L-methionine contacts are provided by residues 32–34 (GGH), Asp52, Phe79, Asp100, and Gln107.

This sequence belongs to the methyltransferase superfamily. RsmH family.

Its subcellular location is the cytoplasm. The enzyme catalyses cytidine(1402) in 16S rRNA + S-adenosyl-L-methionine = N(4)-methylcytidine(1402) in 16S rRNA + S-adenosyl-L-homocysteine + H(+). Specifically methylates the N4 position of cytidine in position 1402 (C1402) of 16S rRNA. The chain is Ribosomal RNA small subunit methyltransferase H from Bacillus cereus (strain AH187).